The primary structure comprises 285 residues: Nucleotide-binding protein HI_1146 (285 aa).

8–15 contributes to the ATP binding site; it reads GRSGAGKS. 56–59 contributes to the GTP binding site; sequence DIRN.

The protein belongs to the RapZ-like family.

Functionally, displays ATPase and GTPase activities. The protein is Nucleotide-binding protein HI_1146 of Haemophilus influenzae (strain ATCC 51907 / DSM 11121 / KW20 / Rd).